A 968-amino-acid polypeptide reads, in one-letter code: RNA polymerase-associated protein RapA (968 aa).

The Helicase ATP-binding domain occupies 164-334 (DVGRRHAPRV…FARLRLLDPN (171 aa)). 177-184 (DEVGLGKT) contributes to the ATP binding site. The short motif at 280–283 (DEAH) is the DEAH box element. The Helicase C-terminal domain occupies 490–644 (RVEWLMGYLT…TCPTGRAIYD (155 aa)).

Belongs to the SNF2/RAD54 helicase family. RapA subfamily. In terms of assembly, interacts with the RNAP. Has a higher affinity for the core RNAP than for the holoenzyme. Its ATPase activity is stimulated by binding to RNAP.

In terms of biological role, transcription regulator that activates transcription by stimulating RNA polymerase (RNAP) recycling in case of stress conditions such as supercoiled DNA or high salt concentrations. Probably acts by releasing the RNAP, when it is trapped or immobilized on tightly supercoiled DNA. Does not activate transcription on linear DNA. Probably not involved in DNA repair. The protein is RNA polymerase-associated protein RapA of Salmonella arizonae (strain ATCC BAA-731 / CDC346-86 / RSK2980).